The chain runs to 314 residues: 2,3-dihydroxyphenylpropionate/2,3-dihydroxicinnamic acid 1,2-dioxygenase (314 aa).

Histidine 115 serves as the catalytic Proton donor. The Proton acceptor role is filled by histidine 179.

Belongs to the LigB/MhpB extradiol dioxygenase family. In terms of assembly, homotetramer. Requires Fe(2+) as cofactor.

It carries out the reaction 3-(2,3-dihydroxyphenyl)propanoate + O2 = (2Z,4E)-2-hydroxy-6-oxonona-2,4-dienedioate + H(+). It catalyses the reaction (2E)-3-(2,3-dihydroxyphenyl)prop-2-enoate + O2 = (2Z,4E,7E)-2-hydroxy-6-oxonona-2,4,7-trienedioate + H(+). The protein operates within aromatic compound metabolism; 3-phenylpropanoate degradation. In terms of biological role, catalyzes the non-heme iron(II)-dependent oxidative cleavage of 2,3-dihydroxyphenylpropionic acid and 2,3-dihydroxicinnamic acid into 2-hydroxy-6-ketononadienedioate and 2-hydroxy-6-ketononatrienedioate, respectively. The sequence is that of 2,3-dihydroxyphenylpropionate/2,3-dihydroxicinnamic acid 1,2-dioxygenase from Escherichia coli O81 (strain ED1a).